The following is a 197-amino-acid chain: 3-isopropylmalate dehydratase small subunit (197 aa).

It belongs to the LeuD family. LeuD type 1 subfamily. In terms of assembly, heterodimer of LeuC and LeuD.

It carries out the reaction (2R,3S)-3-isopropylmalate = (2S)-2-isopropylmalate. It functions in the pathway amino-acid biosynthesis; L-leucine biosynthesis; L-leucine from 3-methyl-2-oxobutanoate: step 2/4. Catalyzes the isomerization between 2-isopropylmalate and 3-isopropylmalate, via the formation of 2-isopropylmaleate. In Corynebacterium glutamicum (strain R), this protein is 3-isopropylmalate dehydratase small subunit.